A 377-amino-acid polypeptide reads, in one-letter code: Unsaturated 3S-rhamnoglycuronyl hydrolase (377 aa).

The N-terminal stretch at 1–25 (MKNQALKILTLCVLVGSAMSLKLYA) is a signal peptide. Catalysis depends on Asp-161, which acts as the Proton donor.

It belongs to the glycosyl hydrolase 105 family.

It is found in the periplasm. Functionally, unsaturated beta-glucuronyl hydrolase involved in ulvan degradation. Ulvan is the main polysaccharide component of the Ulvales (green seaweed) cell wall. It is composed of disaccharide building blocks comprising 3-sulfated rhamnose (Rha3S) linked to D-glucuronic acid (GlcA), L-iduronic acid (IduA), or D-xylose (Xyl). Unsaturated 3S-rhamnoglycuronyl hydrolase works together with ulvan lyases to fully degrade the ulvan polymer, catalyzing specifically the cleavage of the unsaturated 4-deoxy-L-threo-hex-4-enopyranosiduronic acid (deltaUA) of deltaUA-Rha3S disaccharides and deltaUA-Rha3S-Xyl-Rha3S tetrasaccharides, the end products of the ulvan lyase reaction. Also hydrolases deltaUA-Rha3S-IduA-Rha3S and deltaUA-Rha3S-GlcA-Rha3S tetrasaccharidestetrasaccharides. Prefers tetrasaccharides over disaccharides and prefers an uronic residue at subsite +2. In Formosa agariphila (strain DSM 15362 / KCTC 12365 / LMG 23005 / KMM 3901 / M-2Alg 35-1), this protein is Unsaturated 3S-rhamnoglycuronyl hydrolase.